Reading from the N-terminus, the 144-residue chain is MNSNKSRGSSVERYIVSRLRDKGFAVIRAPASGSKRKDHVPDIIALKSGVIILIEVKSRKNGQKIYIEKEQAEGIREFAKRSGGELFLGVKLPKMLRFIKFDMLRQTEGGNYAIDLETVEKGMELEDLVRYVESKISRTLDSFL.

Residue Glu12 coordinates Mg(2+). The active site involves Ser32. Residues Asp42 and Glu55 each coordinate Mg(2+).

The protein belongs to the Holliday junction resolvase Hjc family. Homodimer; forms a 2:1 complex with Hel308 (Hjm). May form a complex with Holliday junction DNA, Hjc and Hjm. Mg(2+) serves as cofactor.

The catalysed reaction is Endonucleolytic cleavage at a junction such as a reciprocal single-stranded crossover between two homologous DNA duplexes (Holliday junction).. With respect to regulation, cleavage stimulated by PCNA123 and PCNA323 and by RadC2. Functionally, a structure-specific endonuclease that resolves Holliday junction (HJ) intermediates during genetic recombination. Cleaves 4-way DNA junctions introducing paired nicks in opposing strands, leaving a 5'-terminal phosphate and a 3'-terminal hydroxyl group that are subsequently ligated to produce recombinant products. Inhibits the helicase activity of Hel308 (Hjm). This chain is Crossover junction endodeoxyribonuclease Hjc, found in Sulfurisphaera tokodaii (strain DSM 16993 / JCM 10545 / NBRC 100140 / 7) (Sulfolobus tokodaii).